Here is a 289-residue protein sequence, read N- to C-terminus: Diaminopimelate epimerase (289 aa).

Asn13, Gln47, and Asn67 together coordinate substrate. Catalysis depends on Cys76, which acts as the Proton donor. Substrate-binding positions include 77-78 (GN), Asn167, Asn200, and 218-219 (ER). The active-site Proton acceptor is Cys227. 228 to 229 (GT) serves as a coordination point for substrate.

This sequence belongs to the diaminopimelate epimerase family. In terms of assembly, homodimer.

Its subcellular location is the cytoplasm. It carries out the reaction (2S,6S)-2,6-diaminopimelate = meso-2,6-diaminopimelate. It functions in the pathway amino-acid biosynthesis; L-lysine biosynthesis via DAP pathway; DL-2,6-diaminopimelate from LL-2,6-diaminopimelate: step 1/1. Catalyzes the stereoinversion of LL-2,6-diaminopimelate (L,L-DAP) to meso-diaminopimelate (meso-DAP), a precursor of L-lysine and an essential component of the bacterial peptidoglycan. In Burkholderia vietnamiensis (strain G4 / LMG 22486) (Burkholderia cepacia (strain R1808)), this protein is Diaminopimelate epimerase.